The sequence spans 331 residues: NADH-cytochrome b5 reductase 2 (331 aa).

Residues 36–56 form a helical membrane-spanning segment; sequence VGILIASAVGMAGFGTYFMFG. Residues 80–185 form the FAD-binding FR-type domain; the sequence is KGFVSLQLDD…KGPLPKYEWS (106 aa). Position 188-223 (188-223) interacts with FAD; sequence KHPHVAMIAGGTGITPMYQIMRAIFKNPADKTKVTL.

It belongs to the flavoprotein pyridine nucleotide cytochrome reductase family. FAD serves as cofactor.

It localises to the mitochondrion outer membrane. The catalysed reaction is 2 Fe(III)-[cytochrome b5] + NADH = 2 Fe(II)-[cytochrome b5] + NAD(+) + H(+). Functionally, may mediate the reduction of outer membrane cytochrome b5. In Pyricularia oryzae (strain 70-15 / ATCC MYA-4617 / FGSC 8958) (Rice blast fungus), this protein is NADH-cytochrome b5 reductase 2 (MCR1).